Consider the following 215-residue polypeptide: BAG family molecular chaperone regulator 5, mitochondrial (215 aa).

Residues 1–14 constitute a mitochondrion transit peptide; it reads MKRSRKFSSSTTTT. The IQ domain occupies 50-79; the sequence is ATAAAARIQSGYRSYRIRNLYKKISSINRE. The BAG domain occupies 72 to 149; sequence KISSINREAN…GMQEILDSIS (78 aa).

In terms of assembly, binds to the ATPase domain of HSP70/HSC70 chaperones. Interacts with HSP70-1.

Its subcellular location is the mitochondrion. Its function is as follows. Co-chaperone that regulates diverse cellular pathways, such as programmed cell death and stress responses. The chain is BAG family molecular chaperone regulator 5, mitochondrial (BAG5) from Arabidopsis thaliana (Mouse-ear cress).